An 883-amino-acid chain; its full sequence is Phosphoenolpyruvate carboxylase (883 aa).

Residues histidine 138 and lysine 546 contribute to the active site.

This sequence belongs to the PEPCase type 1 family. Requires Mg(2+) as cofactor.

It carries out the reaction oxaloacetate + phosphate = phosphoenolpyruvate + hydrogencarbonate. Its function is as follows. Forms oxaloacetate, a four-carbon dicarboxylic acid source for the tricarboxylic acid cycle. In Salmonella dublin (strain CT_02021853), this protein is Phosphoenolpyruvate carboxylase.